The following is a 522-amino-acid chain: Transcription factor SPT20 homolog (522 aa).

Residue Ser-284 is modified to Phosphoserine. Disordered regions lie at residues Asp-361–Asn-380 and Pro-408–Ser-522. Residues Ser-412–Ser-425 are compositionally biased toward low complexity. Residues Thr-433–Val-442 show a composition bias toward polar residues. Positions Ser-458–Asn-467 are enriched in low complexity. Residues Pro-481–Ile-492 are compositionally biased toward pro residues. Phosphothreonine is present on Thr-482. Positions Leu-506 to Ser-522 are enriched in low complexity. Ser-507 and Ser-512 each carry phosphoserine.

The protein belongs to the SPT20 family. In terms of assembly, interacts with ATG9A. Interacts with MAPK14.

Its function is as follows. Required for MAP kinase p38 (MAPK11, MAPK12, MAPK13 and/or MAPK14) activation during gastrulation. Required for down-regulation of E-cadherin during gastrulation by regulating E-cadherin protein level downstream from NCK-interacting kinase (NIK) and independently of the regulation of transcription by FGF signaling and Snail. Required for starvation-induced ATG9A trafficking during autophagy. The protein is Transcription factor SPT20 homolog (SUPT20H) of Pongo abelii (Sumatran orangutan).